The following is a 130-amino-acid chain: Small ribosomal subunit protein uS9 (130 aa).

The protein belongs to the universal ribosomal protein uS9 family.

The protein is Small ribosomal subunit protein uS9 of Onion yellows phytoplasma (strain OY-M).